Consider the following 478-residue polypeptide: Stromelysin-1 (478 aa).

A signal peptide spans 1–17 (MQNLPALLLFCGVVCSA). A propeptide spans 18 to 99 (YPVDRAAEDE…PRCGVPDVGD (82 aa)) (activation peptide). The Cysteine switch signature appears at 90–97 (PRCGVPDV). Residue Cys-92 participates in Zn(2+) binding. 2 residues coordinate Ca(2+): Asp-124 and Asp-158. 2 residues coordinate Zn(2+): His-168 and Asp-170. Residues Asp-175, Gly-176, Gly-178, and Val-180 each contribute to the Ca(2+) site. His-183 contacts Zn(2+). Ca(2+)-binding residues include Gly-190 and Asp-194. His-196 lines the Zn(2+) pocket. Ca(2+)-binding residues include Asp-198, Asp-199, and Glu-201. His-218 lines the Zn(2+) pocket. Glu-219 is a catalytic residue. The Zn(2+) site is built by His-222 and His-228. The disordered stretch occupies residues 260 to 286 (QSLYGGPPSDSSNDPVVPTESVPPGPG). The span at 266 to 277 (PPSDSSNDPVVP) shows a compositional bias: low complexity. Hemopexin repeat units follow at residues 288 to 337 (PAAC…WPSL), 338 to 384 (PSGL…GFPP), 386 to 434 (VKKI…FPGV), and 435 to 478 (DSKV…WLNC). Cysteines 291 and 478 form a disulfide. A Ca(2+)-binding site is contributed by Asp-298. 2 residues coordinate Ca(2+): Asp-390 and Asp-439. N-linked (GlcNAc...) asparagine glycosylation is present at Asn-452.

The protein belongs to the peptidase M10A family. Ca(2+) serves as cofactor. The cofactor is Zn(2+).

The protein resides in the secreted. The protein localises to the extracellular space. It localises to the extracellular matrix. The catalysed reaction is Preferential cleavage where P1', P2' and P3' are hydrophobic residues.. Its function is as follows. Metalloproteinase with a rather broad substrate specificity that can degrade fibronectin, laminin, gelatins of type I, III, IV, and V; collagens III, IV, X, and IX, and cartilage proteoglycans. Activates different molecules including growth factors, plasminogen or other matrix metalloproteinases such as MMP9. Once released into the extracellular matrix (ECM), the inactive pro-enzyme is activated by the plasmin cascade signaling pathway. Also acts intracellularly. For example, in dopaminergic neurons, gets activated by the serine protease HTRA2 upon stress and plays a pivotal role in DA neuronal degeneration by mediating microglial activation and alpha-synuclein/SNCA cleavage. In addition, plays a role in immune response and possesses antiviral activity against various viruses. Mechanistically, translocates from the cytoplasm into the cell nucleus upon virus infection to influence NF-kappa-B activities. The sequence is that of Stromelysin-1 (MMP3) from Canis lupus familiaris (Dog).